The primary structure comprises 402 residues: Deacetylase Oant_2987 (402 aa).

Residues histidine 70, histidine 72, lysine 168, histidine 201, histidine 224, and aspartate 284 each coordinate Zn(2+). Lysine 168 is modified (N6-carboxylysine).

This sequence belongs to the metallo-dependent hydrolases superfamily. Atu3266/EF_0837 deacetylase family. Zn(2+) serves as cofactor.

Functionally, esterase that catalyzes the deacetylation of acetyl-(R)-mandelate (in vitro). Can also hydrolyze acetyl glycolate, but with lower efficiency. Has very low N-acetyl-D-amino acid deacetylase activity with N-acetyl-D-serine and N-acetyl-D-threonine (in vitro). Theoretical substrate docking studies suggest that other N-acetylated amino acids may optimally occupy the active site and may in fact be the physiological substrates. The chain is Deacetylase Oant_2987 from Brucella anthropi (strain ATCC 49188 / DSM 6882 / CCUG 24695 / JCM 21032 / LMG 3331 / NBRC 15819 / NCTC 12168 / Alc 37) (Ochrobactrum anthropi).